The following is a 528-amino-acid chain: Aspartic proteinase-like protein 1 (528 aa).

Residues 1–22 form the signal peptide; that stretch reads MVSRSAFLLFCVLFLATEETLA. The Peptidase A1 domain occupies 100–449; the sequence is HYTWIDIGTP…DRENMKLGWS (350 aa). The active site involves aspartate 118. 2 N-linked (GlcNAc...) asparagine glycosylation sites follow: asparagine 193 and asparagine 217. Residue aspartate 333 is part of the active site. Residues asparagine 358 and asparagine 391 are each glycosylated (N-linked (GlcNAc...) asparagine). The tract at residues 451 to 503 is disordered; sequence SKCQEDKIEPPQASPGSTSSPNPLPTDEQQSRGGHAVSPAIAGKTPSKTPSSS. The span at 464–482 shows a compositional bias: polar residues; it reads SPGSTSSPNPLPTDEQQSR. Over residues 494 to 503 the composition is skewed to low complexity; it reads KTPSKTPSSS. The GPI-anchor amidated serine moiety is linked to residue serine 503. The propeptide at 504–528 is removed in mature form; it reads SSYSFSSIMRLFNSLLLLHWLASLM.

This sequence belongs to the peptidase A1 family.

It localises to the cell membrane. This is Aspartic proteinase-like protein 1 from Arabidopsis thaliana (Mouse-ear cress).